Reading from the N-terminus, the 154-residue chain is Cyanate hydratase (154 aa).

Catalysis depends on residues Arg100, Glu103, and Ser126.

It belongs to the cyanase family.

It carries out the reaction cyanate + hydrogencarbonate + 3 H(+) = NH4(+) + 2 CO2. Catalyzes the reaction of cyanate with bicarbonate to produce ammonia and carbon dioxide. This is Cyanate hydratase from Aspergillus fumigatus (strain CBS 144.89 / FGSC A1163 / CEA10) (Neosartorya fumigata).